A 353-amino-acid polypeptide reads, in one-letter code: Ferredoxin--NADP reductase (353 aa).

FAD-binding residues include threonine 25, glutamate 44, glutamine 52, tyrosine 57, valine 97, phenylalanine 132, aspartate 298, and serine 339.

It belongs to the ferredoxin--NADP reductase type 2 family. As to quaternary structure, homodimer. FAD serves as cofactor.

The catalysed reaction is 2 reduced [2Fe-2S]-[ferredoxin] + NADP(+) + H(+) = 2 oxidized [2Fe-2S]-[ferredoxin] + NADPH. This is Ferredoxin--NADP reductase from Chlorobium phaeovibrioides (strain DSM 265 / 1930) (Prosthecochloris vibrioformis (strain DSM 265)).